The following is a 154-amino-acid chain: UPF0547 protein C16orf87 homolog (154 aa).

The interval 43–119 (NAKHSEKSPP…KHEEEREKQE (77 aa)) is disordered. The segment covering 68 to 84 (VRREKINSTVNKDLENR) has biased composition (basic and acidic residues). S91 is modified (phosphoserine). The stretch at 104–132 (KSSSAKKHEEEREKQEKEIDIYANLSDEK) forms a coiled coil. Residues 109 to 119 (KKHEEEREKQE) are compositionally biased toward basic and acidic residues.

This sequence belongs to the UPF0547 family.

This is UPF0547 protein C16orf87 homolog from Mus musculus (Mouse).